The primary structure comprises 567 residues: Urease subunit alpha (567 aa).

One can recognise a Urease domain in the interval 129-567 (GGIDTHIHWI…LPMAQRYFLF (439 aa)). Positions 134, 136, and 217 each coordinate Ni(2+). Lys-217 carries the N6-carboxylysine modification. His-219 contributes to the substrate binding site. Residues His-246 and His-272 each contribute to the Ni(2+) site. His-320 functions as the Proton donor in the catalytic mechanism. Asp-360 serves as a coordination point for Ni(2+).

The protein belongs to the metallo-dependent hydrolases superfamily. Urease alpha subunit family. In terms of assembly, heterotrimer of UreA (gamma), UreB (beta) and UreC (alpha) subunits. Three heterotrimers associate to form the active enzyme. It depends on Ni cation as a cofactor. In terms of processing, carboxylation allows a single lysine to coordinate two nickel ions.

Its subcellular location is the cytoplasm. It catalyses the reaction urea + 2 H2O + H(+) = hydrogencarbonate + 2 NH4(+). It functions in the pathway nitrogen metabolism; urea degradation; CO(2) and NH(3) from urea (urease route): step 1/1. The chain is Urease subunit alpha from Klebsiella pneumoniae (strain 342).